Consider the following 167-residue polypeptide: Insertion element IS1 protein InsB (167 aa).

The protein belongs to the transposase 27 family.

Its function is as follows. Absolutely required for transposition of IS1. This chain is Insertion element IS1 protein InsB (insB), found in Escherichia coli.